The primary structure comprises 2314 residues: MKGHQFQSWIFELREILREVKNSHYFLDSWTQFDSVGSFTHIFFHQERFMKLFDPRIWSILLSRDSQGSTSNRYFTVKGVVLLVVAVLIYRINNRNIVERKNLYLRGLLPIPILPIPMNSIGPRNDTLEESFWSSNINRLIVSLLYLPKGKKISESCFMDSKESAWVLPITKKKCIIPESNWGSRWWRNRIGKKRDSSCKISNETETIAGIEISFKEKDIQYLKFLFVSYTDDPIRKDHDWELFDRLSPRKKRNIINLNSGQLFEILVKHLICYLMSAFREKRPIEMGGFFKQQGGAGATIQSNDIEHVSHLFSRKKWGIFLQNCAQFHMWQFYQDLFVSWGKNQHESDFLRNVSRDNWIWLDNVWLVNKDRFFSKVLNVSSNIQYDSTRSIFVQVTDSSQLKGSSDQSGDHFDSIRNENSEYHTLINQTEIQQLKERSILWDPSFLQTERTEIESDRFPKCLSGYSSISRLFTEREKQMNNHLLPEEIEEFLGNPTRSIRSFFSDRWSELRLGSNPTERSTRDQKLLKKQQDVSFVPSRRSENKEMVAIFKIITYLQNTVSIHPISSDPGCDMVPKDEPDIDSSHKISFLNKNPFLDLFHLFHDRNKGGYTLHHDFESEERFQEMADLFTLSITEAGLVYHKGFTFSIDSYGLDQKKFLNEVFNSRDESKKKSLWFLPPIFDEENESFYGRIRKKSARISCGNDLEDPNPKIVVFSSNNIMGAVNQYRLIRNLIQIQYRTYEYIRNVSNRFFLMNRPDRNFEYGIQGDPIGNDTLNHLTIIKHTINQHLSNLKKSQKKWFDPLISRTERCMNRDPDAYRYKWSNGSKNFQEHLEHFVSEQKHRFQVVFGRLRINQYSIDWSEVIDKQDLSKSLRFFLSKSLLFLSKSLRFFLSKSLPFFFVSIGNIPIHRFEIHIYELKGPNDQLCNPLLESIGVQIVHLNKLKPFLLDDHDISQRSKFLINGGTISPFLFNKIPKWMIDSFHTRKNRRKSFDNTDSYFSMISHDRDNWLNPVKPFHRSSSISSFYKANRLRFLNNPHHLWFYCNKRFPFDVEKARINNYDLTYGQFLNVLFIRNKIFSLCVRKKKHVFGGRDAISPIESQVSDIFIPNDFPQSGDETYNLYKSFHFPIRSDSFVRRAIYSIADISGTPLTEEQIVHFQRTYCQPLSDMNLSDSEGKNLHQYLRFNSNMGLIHTLCSEKDFPSGKRKKRTLCLKKCVEKWQMYRTFQRDNDFSNLSKWNLFQTYMPWFLTSTGCKYLNFTLLDTFSDPLPILSNSPKFVSIFHDIMHGSDISWPIPQQKGRAILPQRNWISEMSSKCLQNLLLYEEIIHRNNESPALLIWTHLRSPNARELLYSILFLLLVAGYLVRTHLLFVSRASSELQTELEKIKSLMIPSYMMELRKLLDRYPTPELNSFWLKNLFLVALEQLGDSLEEIRGSASGGNILLGGGPAYGVKSIRSKKKYLNINLIDIIDFISIIPNPINRITFSRNTRHLSHTSKEIYSLIRKRKKNVNGGWIDEKIESWVANSDSIDDEEREFLVQFSTLTTEKRIDQILLSLTHSDHLSKNDSGYQMIEQPGSIYLRYLVDIHKKYLMNYEFNRSCLAERRIFLAHYQTITYSQTSCGTNSSHFPSHGKPFSLRLALSPSRGILVIGSIGTGRSYLVKYLATNSYVPFITVFPNKFLDDKPKGSLFDNIDIDDSDDIDIDDSDDIDIDDSDNIDDLDTELLTMTNVLTMYMTPKIDRFDITLQFELAKAMSPCIIWIPNIHDLYVNESNYLSLGLLVNYLSRDCERCSTRNILLIASTHIPQKVDPALIAPNKLNTCIKIRRLLIPQQRKHFFILSYTRGFHLEKKMFHTNVFGSITMGSNARDLVALTNEALSISITQKKSIIDTNTIRSAIHRQTWDLRSQVRWVQDHGILFYQIGRAVAQNVLLSDCPIDPISIYMKKKSCKEGDSYLYKWYFELGTSMKKLTILLYLLSCSAGSVAQDLWSPPGPDERNCITSYGFVENDSDLVHGLLEVEGALVGSSRTEKDCSQFDNDRVILLLRSEPKNPFDMIQNGSCSIVDQRFLYEKYESELEEGEGEGALDPQQIEEDLFNHIVWAPRIWRPCGNLFDCIERPNELGFPYWWTRSFRGKRILYHKEDALQENDSEFLQSGTVRYQRLDRSSKEQGFFRISQFIWDPADPFFFLFKDQPFVFSRREFFADEEMSKGLITSQTNPTTSIYKRWFIKNTQQNHFELLIHRQRWLRTNSLLSNGSFRSNTLSESYQYLSNLFLSNRTLLDQMTKALLRKRWLFPDEMKHWIHVTGERFPIP.

1653–1660 contributes to the ATP binding site; that stretch reads GSIGTGRS.

The protein belongs to the Ycf2 family.

It localises to the plastid. It is found in the chloroplast stroma. In terms of biological role, probable ATPase of unknown function. Its presence in a non-photosynthetic plant (Epifagus virginiana) and experiments in tobacco indicate that it has an essential function which is probably not related to photosynthesis. This Piper cenocladum (Ant piper) protein is Protein Ycf2.